The sequence spans 956 residues: Protein translocase subunit SecA (956 aa).

ATP is bound by residues Gln-87, 105–109 (GEGKT), and Asp-524. The Zn(2+) site is built by Cys-940, Cys-942, Cys-951, and His-952.

This sequence belongs to the SecA family. As to quaternary structure, monomer and homodimer. Part of the essential Sec protein translocation apparatus which comprises SecA, SecYEG and auxiliary proteins SecDF-YajC and YidC. It depends on Zn(2+) as a cofactor.

The protein resides in the cell inner membrane. The protein localises to the cytoplasm. It carries out the reaction ATP + H2O + cellular proteinSide 1 = ADP + phosphate + cellular proteinSide 2.. In terms of biological role, part of the Sec protein translocase complex. Interacts with the SecYEG preprotein conducting channel. Has a central role in coupling the hydrolysis of ATP to the transfer of proteins into and across the cell membrane, serving both as a receptor for the preprotein-SecB complex and as an ATP-driven molecular motor driving the stepwise translocation of polypeptide chains across the membrane. This is Protein translocase subunit SecA from Beijerinckia indica subsp. indica (strain ATCC 9039 / DSM 1715 / NCIMB 8712).